Here is a 180-residue protein sequence, read N- to C-terminus: Baseplate protein gp48 (180 aa).

In terms of assembly, part of a complex composed of three DNA circularization protein N, three baseplate hub protein gp44 and three sub-complex wedge (made of two copies of each baseplate protein gp46, gp47 and gp48) that forms the baseplate.

The protein resides in the virion. It is found in the host cytoplasm. Functionally, component of the baseplate. This chain is Baseplate protein gp48, found in Enterobacteriaceae (Bacteriophage Mu).